Here is a 321-residue protein sequence, read N- to C-terminus: Ribose-phosphate pyrophosphokinase C (321 aa).

Positions 132 and 147 each coordinate Mg(2+). Residues 214–229 form a binding of phosphoribosylpyrophosphate region; the sequence is SGKVAIIIGSIADTCE.

The protein belongs to the ribose-phosphate pyrophosphokinase family. It depends on Mg(2+) as a cofactor.

Its subcellular location is the cytoplasm. It catalyses the reaction D-ribose 5-phosphate + ATP = 5-phospho-alpha-D-ribose 1-diphosphate + AMP + H(+). It participates in metabolic intermediate biosynthesis; 5-phospho-alpha-D-ribose 1-diphosphate biosynthesis; 5-phospho-alpha-D-ribose 1-diphosphate from D-ribose 5-phosphate (route I): step 1/1. This is Ribose-phosphate pyrophosphokinase C (prsC) from Dictyostelium discoideum (Social amoeba).